Here is a 156-residue protein sequence, read N- to C-terminus: 6,7-dimethyl-8-ribityllumazine synthase (156 aa).

Residues Phe22, 56-58 (AFE), and 80-82 (VVI) contribute to the 5-amino-6-(D-ribitylamino)uracil site. Residue 85–86 (ST) coordinates (2S)-2-hydroxy-3-oxobutyl phosphate. Residue His88 is the Proton donor of the active site. Phe113 provides a ligand contact to 5-amino-6-(D-ribitylamino)uracil. Arg127 serves as a coordination point for (2S)-2-hydroxy-3-oxobutyl phosphate.

Belongs to the DMRL synthase family.

The enzyme catalyses (2S)-2-hydroxy-3-oxobutyl phosphate + 5-amino-6-(D-ribitylamino)uracil = 6,7-dimethyl-8-(1-D-ribityl)lumazine + phosphate + 2 H2O + H(+). It functions in the pathway cofactor biosynthesis; riboflavin biosynthesis; riboflavin from 2-hydroxy-3-oxobutyl phosphate and 5-amino-6-(D-ribitylamino)uracil: step 1/2. In terms of biological role, catalyzes the formation of 6,7-dimethyl-8-ribityllumazine by condensation of 5-amino-6-(D-ribitylamino)uracil with 3,4-dihydroxy-2-butanone 4-phosphate. This is the penultimate step in the biosynthesis of riboflavin. This Streptococcus agalactiae serotype Ia (strain ATCC 27591 / A909 / CDC SS700) protein is 6,7-dimethyl-8-ribityllumazine synthase.